The sequence spans 236 residues: uncharacterized protein (236 aa).

The region spanning 4–236 is the GP-PDE domain; that stretch reads QFLIAYRGYS…VKFQITAQIY (233 aa).

To glycerophosphoryl diester phosphodiesterases (EC 3.1.4.46). The protein to M.genitalium MG293.

This is an uncharacterized protein from Mycoplasma genitalium (strain ATCC 33530 / DSM 19775 / NCTC 10195 / G37) (Mycoplasmoides genitalium).